A 367-amino-acid chain; its full sequence is Phosphoribosylaminoimidazole-succinocarboxamide synthase (367 aa).

This sequence belongs to the SAICAR synthetase family.

The enzyme catalyses 5-amino-1-(5-phospho-D-ribosyl)imidazole-4-carboxylate + L-aspartate + ATP = (2S)-2-[5-amino-1-(5-phospho-beta-D-ribosyl)imidazole-4-carboxamido]succinate + ADP + phosphate + 2 H(+). It functions in the pathway purine metabolism; IMP biosynthesis via de novo pathway; 5-amino-1-(5-phospho-D-ribosyl)imidazole-4-carboxamide from 5-amino-1-(5-phospho-D-ribosyl)imidazole-4-carboxylate: step 1/2. In Shewanella baltica (strain OS195), this protein is Phosphoribosylaminoimidazole-succinocarboxamide synthase.